Reading from the N-terminus, the 120-residue chain is Large ribosomal subunit protein uL18 (120 aa).

It belongs to the universal ribosomal protein uL18 family. As to quaternary structure, part of the 50S ribosomal subunit; part of the 5S rRNA/L5/L18/L25 subcomplex. Contacts the 5S and 23S rRNAs.

Its function is as follows. This is one of the proteins that bind and probably mediate the attachment of the 5S RNA into the large ribosomal subunit, where it forms part of the central protuberance. The protein is Large ribosomal subunit protein uL18 of Methylobacterium sp. (strain 4-46).